The chain runs to 351 residues: MPEDRAKAYTEAGVDINAGNALVSRIKSMVASTHTKGVISDIGGFGGLFKPDLGGMEDPVLVSSTDGVGTKLKLAFMFDKHDTVGIDLVAMSVNDVLVQGAKPLFFLDYFATGKLDVEAAAQVVSGVAEGCRQAQCALLGGETAEMPDMYAPGEYDLAGFCVGIADNARIVDGSDIRVGDVIIGLGASGVHSNGYTLVRKLFEKSGLGADDIMPGTDASVRDVLMTPTRIYVETIRNLMRDFQIKGMVHVTGGGFYDNIPRVLPASVDARIAFGAWDILPVFHWLRDLGELSWPEMLQIFNCGIGYVVIVGQEEADDVLGRLAALDQPAWAIGTVERRREESEEQVYVDFG.

This sequence belongs to the AIR synthase family.

Its subcellular location is the cytoplasm. The catalysed reaction is 2-formamido-N(1)-(5-O-phospho-beta-D-ribosyl)acetamidine + ATP = 5-amino-1-(5-phospho-beta-D-ribosyl)imidazole + ADP + phosphate + H(+). It participates in purine metabolism; IMP biosynthesis via de novo pathway; 5-amino-1-(5-phospho-D-ribosyl)imidazole from N(2)-formyl-N(1)-(5-phospho-D-ribosyl)glycinamide: step 2/2. This chain is Phosphoribosylformylglycinamidine cyclo-ligase, found in Oleidesulfovibrio alaskensis (strain ATCC BAA-1058 / DSM 17464 / G20) (Desulfovibrio alaskensis).